Consider the following 423-residue polypeptide: Serine--tRNA ligase (423 aa).

L-serine is bound at residue Thr-230–Glu-232. ATP is bound at residue Arg-261–Glu-263. Glu-284 serves as a coordination point for L-serine. Position 348-351 (Glu-348–Ser-351) interacts with ATP. Ser-384 serves as a coordination point for L-serine.

The protein belongs to the class-II aminoacyl-tRNA synthetase family. Type-1 seryl-tRNA synthetase subfamily. As to quaternary structure, homodimer. The tRNA molecule binds across the dimer.

It localises to the cytoplasm. The catalysed reaction is tRNA(Ser) + L-serine + ATP = L-seryl-tRNA(Ser) + AMP + diphosphate + H(+). The enzyme catalyses tRNA(Sec) + L-serine + ATP = L-seryl-tRNA(Sec) + AMP + diphosphate + H(+). It functions in the pathway aminoacyl-tRNA biosynthesis; selenocysteinyl-tRNA(Sec) biosynthesis; L-seryl-tRNA(Sec) from L-serine and tRNA(Sec): step 1/1. Catalyzes the attachment of serine to tRNA(Ser). Is also able to aminoacylate tRNA(Sec) with serine, to form the misacylated tRNA L-seryl-tRNA(Sec), which will be further converted into selenocysteinyl-tRNA(Sec). In Acetivibrio thermocellus (strain ATCC 27405 / DSM 1237 / JCM 9322 / NBRC 103400 / NCIMB 10682 / NRRL B-4536 / VPI 7372) (Clostridium thermocellum), this protein is Serine--tRNA ligase.